The chain runs to 168 residues: SsrA-binding protein (168 aa).

The protein belongs to the SmpB family.

Its subcellular location is the cytoplasm. Functionally, required for rescue of stalled ribosomes mediated by trans-translation. Binds to transfer-messenger RNA (tmRNA), required for stable association of tmRNA with ribosomes. tmRNA and SmpB together mimic tRNA shape, replacing the anticodon stem-loop with SmpB. tmRNA is encoded by the ssrA gene; the 2 termini fold to resemble tRNA(Ala) and it encodes a 'tag peptide', a short internal open reading frame. During trans-translation Ala-aminoacylated tmRNA acts like a tRNA, entering the A-site of stalled ribosomes, displacing the stalled mRNA. The ribosome then switches to translate the ORF on the tmRNA; the nascent peptide is terminated with the 'tag peptide' encoded by the tmRNA and targeted for degradation. The ribosome is freed to recommence translation, which seems to be the essential function of trans-translation. The chain is SsrA-binding protein from Mycobacterium sp. (strain JLS).